We begin with the raw amino-acid sequence, 148 residues long: Lysozyme C-2 (148 aa).

The signal sequence occupies residues 1-18; the sequence is MKTLLTLGLLLLSVTAQA. The C-type lysozyme domain maps to 19–148; it reads KVYERCEFAR…LSQYIRNCGV (130 aa). Disulfide bonds link Cys-24/Cys-146, Cys-48/Cys-134, Cys-83/Cys-99, and Cys-95/Cys-113. Residues Glu-53 and Asp-71 contribute to the active site.

The protein belongs to the glycosyl hydrolase 22 family. As to quaternary structure, monomer. In terms of tissue distribution, expressed weakly in myeloblasts, moderately in immature macrophages, and strongly in both mature macrophages and macrophage-rich tissues.

It is found in the secreted. It carries out the reaction Hydrolysis of (1-&gt;4)-beta-linkages between N-acetylmuramic acid and N-acetyl-D-glucosamine residues in a peptidoglycan and between N-acetyl-D-glucosamine residues in chitodextrins.. Its function is as follows. Lysozymes have primarily a bacteriolytic function; those in tissues and body fluids are associated with the monocyte-macrophage system and enhance the activity of immunoagents. Lyz2 is active against a range of Gram-positive and Gram-negative bacteria. More effective than Lyz1 in killing Gram-negative bacteria. Lyz1 and Lyz2 are equally effective in killing Gram-positive bacteria. The chain is Lysozyme C-2 (Lyz2) from Mus musculus (Mouse).